The sequence spans 568 residues: Pre-mRNA-processing protein 45 (568 aa).

3 disordered regions span residues 199 to 232 (EPPK…AQDQ), 281 to 449 (LNQN…QQKI), and 545 to 568 (AGKG…RDEE). Positions 286-364 (KTMRDDIGKR…SRDGDSDRSL (79 aa)) are enriched in basic and acidic residues. The span at 365–379 (SRSLSASDRSYSRSR) shows a compositional bias: low complexity. Basic and acidic residues-rich tracts occupy residues 395–419 (RSPE…LERA), 426–440 (ERLE…DLRL), and 557–568 (RDGPVRFVRDEE).

The protein belongs to the SNW family. As to quaternary structure, associated with the spliceosome.

It is found in the nucleus. Functionally, involved in pre-mRNA splicing. The protein is Pre-mRNA-processing protein 45 (PRP45) of Yarrowia lipolytica (strain CLIB 122 / E 150) (Yeast).